Consider the following 886-residue polypeptide: Cytosolic carboxypeptidase-like protein 5 (886 aa).

Residues 157–570 (YPFSYSDCQD…AMAIAALDMA (414 aa)) form the Peptidase M14 domain. 2 residues coordinate Zn(2+): H252 and E255. A compositionally biased stretch (polar residues) spans 344–353 (AKSPTNQQPT). Disordered regions lie at residues 344 to 363 (AKSP…APLS) and 374 to 401 (EAHL…KTDP). Position 434 (H434) interacts with Zn(2+). Residue E516 is the Proton donor/acceptor of the active site. 2 disordered regions span residues 602-737 (GLTS…RNMG) and 783-846 (TRLQ…PAFS). The segment covering 621–635 (PKSNNSLPVSCSENA) has biased composition (polar residues). Positions 643–654 (STGTSTGGSSSS) are enriched in low complexity. The span at 655–666 (QQNSPQMKNSPS) shows a compositional bias: polar residues. Residues 714–737 (STTSSLAPSPTLASSGPTSSRNMG) show a composition bias toward low complexity. A compositionally biased stretch (polar residues) spans 805–815 (SSPTSPIPQTR). Position 841 is a phosphoserine (S841).

Belongs to the peptidase M14 family. The cofactor is Zn(2+). As to expression, widely expressed. Highly expressed in testis, and moderately in pituitary, brain, eye and kidney.

The protein resides in the cytoplasm. The protein localises to the cytosol. It localises to the nucleus. It is found in the cytoskeleton. Its subcellular location is the spindle. The protein resides in the midbody. The enzyme catalyses gamma-L-glutamyl-L-glutamyl-[protein] + H2O = L-glutamyl-[protein] + L-glutamate. The catalysed reaction is (L-glutamyl)(n+1)-gamma-L-glutamyl-L-glutamyl-[protein] + H2O = (L-glutamyl)(n)-gamma-L-glutamyl-L-glutamyl-[protein] + L-glutamate. It catalyses the reaction C-terminal L-alpha-aminoacyl-L-glutamyl-[tubulin] + H2O = C-terminal L-alpha-aminoacyl-[tubulin] + L-glutamate. It carries out the reaction C-terminal L-alpha-aminoacyl-L-glutamyl-L-glutamyl-[tubulin] + H2O = C-terminal L-alpha-aminoacyl-L-glutamyl-[tubulin] + L-glutamate. Functionally, metallocarboxypeptidase that mediates deglutamylation of tubulin and non-tubulin target proteins. Catalyzes the removal of polyglutamate side chains present on the gamma-carboxyl group of glutamate residues within the C-terminal tail of alpha- and beta-tubulin. Cleaves alpha- and gamma-linked polyglutamate tubulin side-chain, as well as the branching point glutamate. Also catalyzes the removal of alpha-linked glutamate residues from the carboxy-terminus of alpha-tubulin. Mediates deglutamylation of nucleotidyltransferase CGAS, leading to CGAS antiviral defense response activation. The polypeptide is Cytosolic carboxypeptidase-like protein 5 (Mus musculus (Mouse)).